The following is a 321-amino-acid chain: Phosphatidate cytidylyltransferase, mitochondrial (321 aa).

The protein belongs to the TAM41 family. Mg(2+) serves as cofactor. Requires Co(2+) as cofactor. The cofactor is Cu(2+).

The protein localises to the mitochondrion inner membrane. It carries out the reaction a 1,2-diacyl-sn-glycero-3-phosphate + CTP + H(+) = a CDP-1,2-diacyl-sn-glycerol + diphosphate. It participates in phospholipid metabolism; CDP-diacylglycerol biosynthesis; CDP-diacylglycerol from sn-glycerol 3-phosphate: step 3/3. Its function is as follows. Catalyzes the formation of CDP-diacylglycerol (CDP-DAG) from phosphatidic acid (PA) in the mitochondrial inner membrane. Required for the biosynthesis of the dimeric phospholipid cardiolipin, which stabilizes supercomplexes of the mitochondrial respiratory chain in the mitochondrial inner membrane. In Caenorhabditis briggsae, this protein is Phosphatidate cytidylyltransferase, mitochondrial.